The following is a 174-amino-acid chain: MTEKRNIFLIGPMGAGKSTIGRHLAQQLSMEFYDSDQEIEKRTGVDVSWIFDIEGELGFRKREQKIISEIIDKRGIVLSTGGGSILSREIRNKLSSRGVVIYLETSVEKQLVRTKKNKQRPLLQVDNTSIQTVLEELAFHRNPLYQSIADITIRMNDRSIKAIVFYIIRLLNNF.

14 to 19 (GAGKST) contributes to the ATP binding site. Ser-18 is a Mg(2+) binding site. Residues Asp-36, Arg-60, and Gly-82 each contribute to the substrate site. Arg-120 contacts ATP. Arg-141 provides a ligand contact to substrate. Arg-158 provides a ligand contact to ATP.

Belongs to the shikimate kinase family. In terms of assembly, monomer. Requires Mg(2+) as cofactor.

The protein localises to the cytoplasm. The catalysed reaction is shikimate + ATP = 3-phosphoshikimate + ADP + H(+). Its pathway is metabolic intermediate biosynthesis; chorismate biosynthesis; chorismate from D-erythrose 4-phosphate and phosphoenolpyruvate: step 5/7. Its function is as follows. Catalyzes the specific phosphorylation of the 3-hydroxyl group of shikimic acid using ATP as a cosubstrate. This chain is Shikimate kinase, found in Buchnera aphidicola subsp. Baizongia pistaciae (strain Bp).